Reading from the N-terminus, the 158-residue chain is Snaclec coagulation factor X-activating enzyme light chain 2 (158 aa).

A signal peptide spans 1–23; sequence MGRSISVSFGLLAVFLSLSGTGA. Disulfide bonds link Cys-27-Cys-38, Cys-55-Cys-152, and Cys-127-Cys-144. Residues 34-153 enclose the C-type lectin domain; sequence YRYFCYRVFK…CEEPYPFVCK (120 aa).

Belongs to the snaclec family. Heterotrimer; disulfide-linked. The heterotrimer consists of 1 heavy chain (a metalloproteinase) and 2 light chains: LC1 and LC2. As to expression, expressed by the venom gland.

The protein resides in the secreted. Its function is as follows. Regulatory subunit of the blood coagulation factor X-activating enzyme. Activates coagulation factor X (F10) by cleaving the Arg-Ile bond at position 234, activates coagulation factor IX (F9) by cleaving the Arg-Val bond at position 226 and is also able to activate protein C (PROC). May serve as an exosite by which the enzyme recognizes and binds to the Gla domain of factor X (F10) in a calcium-dependent manner. In Macrovipera lebetinus (Levantine viper), this protein is Snaclec coagulation factor X-activating enzyme light chain 2 (LC2).